Reading from the N-terminus, the 146-residue chain is Large ribosomal subunit protein uL15 (146 aa).

The tract at residues 1 to 54 is disordered; the sequence is MTLRLNELAPAEGAKREHRRLGRGIGSGVGKTGGRGIKGQKSRKSGGVRPGFEG. A compositionally biased stretch (gly residues) spans 23–37; sequence RGIGSGVGKTGGRGI.

The protein belongs to the universal ribosomal protein uL15 family. As to quaternary structure, part of the 50S ribosomal subunit.

Functionally, binds to the 23S rRNA. This Acinetobacter baumannii (strain SDF) protein is Large ribosomal subunit protein uL15.